Consider the following 682-residue polypeptide: Acetyl-coenzyme A synthetase 2-like, mitochondrial (682 aa).

Residues 1-38 constitute a mitochondrion transit peptide; the sequence is MAARSLGSGVGRLLRGLQGRSGQSGWSLSVSRSTATRL. CoA is bound by residues 217–220 and Thr-334; that span reads RGGR. Lys-389 carries the post-translational modification N6-acetyllysine. ATP is bound by residues 410 to 412, 434 to 439, Asp-526, and Arg-541; these read GEP and DTWWQT. Ser-549 contacts CoA. Arg-552 is a binding site for ATP. Lys-635 carries the N6-acetyllysine modification.

The protein belongs to the ATP-dependent AMP-binding enzyme family. As to quaternary structure, interacts with SIRT3. Post-translationally, reversibly acetylated at Lys-635. The acetyl-CoA synthase activity is inhibited by acetylation and activated by deacetylation mediated by the deacetylase SIRT3. As to expression, highly expressed in heart, testis, kidney, skeletal muscle, lung and spleen. Detected at low levels in brain.

It localises to the mitochondrion matrix. The enzyme catalyses acetate + ATP + CoA = acetyl-CoA + AMP + diphosphate. It carries out the reaction propanoate + ATP + CoA = propanoyl-CoA + AMP + diphosphate. Inhibited by acetylation at Lys-635 and activated by deacetylation mediated by the deacetylase SIRT3. Functionally, catalyzes the synthesis of acetyl-CoA from short-chain fatty acids. Acetate is the preferred substrate. Can also utilize propionate with a much lower affinity. Provides acetyl-CoA that is utilized mainly for oxidation under ketogenic conditions. Involved in thermogenesis under ketogenic conditions, using acetate as a vital fuel when carbohydrate availability is insufficient. The chain is Acetyl-coenzyme A synthetase 2-like, mitochondrial (Acss1) from Mus musculus (Mouse).